We begin with the raw amino-acid sequence, 124 residues long: Protein MGF 110-4L (124 aa).

Positions M1–R28 are cleaved as a signal peptide. N64 is a glycosylation site (N-linked (GlcNAc...) asparagine; by host). Residues K121–L124 carry the Prevents secretion from ER motif.

The protein belongs to the asfivirus MGF 110 family.

The protein localises to the virion. It is found in the host endoplasmic reticulum-Golgi intermediate compartment. Its function is as follows. Causes the redistribution of lumenal ER protein to an enlarged ERGIC compartment. In Ornithodoros (relapsing fever ticks), this protein is Protein MGF 110-4L.